The following is a 138-amino-acid chain: MVIPHIICLPMALHLWTCRFLSLGRPATNRRNCRRLRRRAVHRQATRPTRRIHHSAPQSFPQGLFNCAFVLLRRHALCRRLVGISTHVRAFKNCSKSDGPRRHKRTGQNSRVCPCGSWIYRIVSDRSGAFKCARRRVL.

Positions 1–18 are cleaved as a signal peptide; sequence MVIPHIICLPMALHLWTC. A RxLR motif is present at residues 34–37; sequence RRLR. N-linked (GlcNAc...) asparagine glycosylation occurs at Asn-93.

Belongs to the RxLR effector family.

Its subcellular location is the secreted. It localises to the host nucleus. Functionally, secreted effector that completely suppresses the host cell death induced by cell death-inducing proteins. This Plasmopara viticola (Downy mildew of grapevine) protein is Secreted RxLR effector protein 91.